Reading from the N-terminus, the 456-residue chain is Asparagine--tRNA ligase (456 aa).

Belongs to the class-II aminoacyl-tRNA synthetase family. In terms of assembly, homodimer.

The protein resides in the cytoplasm. The enzyme catalyses tRNA(Asn) + L-asparagine + ATP = L-asparaginyl-tRNA(Asn) + AMP + diphosphate + H(+). The polypeptide is Asparagine--tRNA ligase (Mycoplasmoides gallisepticum (strain R(low / passage 15 / clone 2)) (Mycoplasma gallisepticum)).